A 317-amino-acid chain; its full sequence is Small ribosomal subunit protein RACK1 (317 aa).

WD repeat units follow at residues 13–44, 61–91, 103–133, 146–178, 190–220, 231–260, and 281–311; these read GHSG…IMWK, GHSH…RLWD, GHTK…KLWN, GHTE…KVWN, GHTG…MLWD, DSGD…KIWD, and AEPP…RVWQ.

This sequence belongs to the WD repeat G protein beta family. Ribosomal protein RACK1 subfamily.

It is found in the cytoplasm. Functionally, involved in the recruitment, assembly and/or regulation of a variety of signaling molecules. Interacts with a wide variety of proteins and plays a role in many cellular processes. Required for VANGL2 membrane localization, inhibits Wnt signaling and regulates cellular polarization and oriented cell division during gastrulation. This Oreochromis niloticus (Nile tilapia) protein is Small ribosomal subunit protein RACK1 (gnb2l1).